Reading from the N-terminus, the 212-residue chain is Glycerol-3-phosphate acyltransferase (212 aa).

The next 4 helical transmembrane spans lie at 3–23 (ILLA…VVVS), 78–98 (DVAV…PVFF), 115–135 (AVHP…AFFF), and 155–177 (FLFG…LLVW).

This sequence belongs to the PlsY family. As to quaternary structure, probably interacts with PlsX.

The protein localises to the cell inner membrane. It catalyses the reaction an acyl phosphate + sn-glycerol 3-phosphate = a 1-acyl-sn-glycero-3-phosphate + phosphate. It functions in the pathway lipid metabolism; phospholipid metabolism. In terms of biological role, catalyzes the transfer of an acyl group from acyl-phosphate (acyl-PO(4)) to glycerol-3-phosphate (G3P) to form lysophosphatidic acid (LPA). This enzyme utilizes acyl-phosphate as fatty acyl donor, but not acyl-CoA or acyl-ACP. The polypeptide is Glycerol-3-phosphate acyltransferase (Burkholderia lata (strain ATCC 17760 / DSM 23089 / LMG 22485 / NCIMB 9086 / R18194 / 383)).